The following is a 461-amino-acid chain: Glycogen synthase (461 aa).

K15 provides a ligand contact to ADP-alpha-D-glucose.

The protein belongs to the glycosyltransferase 1 family. Bacterial/plant glycogen synthase subfamily.

It carries out the reaction [(1-&gt;4)-alpha-D-glucosyl](n) + ADP-alpha-D-glucose = [(1-&gt;4)-alpha-D-glucosyl](n+1) + ADP + H(+). It participates in glycan biosynthesis; glycogen biosynthesis. In terms of biological role, synthesizes alpha-1,4-glucan chains using ADP-glucose. The sequence is that of Glycogen synthase from Fusobacterium nucleatum subsp. nucleatum (strain ATCC 25586 / DSM 15643 / BCRC 10681 / CIP 101130 / JCM 8532 / KCTC 2640 / LMG 13131 / VPI 4355).